The sequence spans 3912 residues: Chondramide synthase cmdD (3912 aa).

Residues 1411–1485 (APRNAREETL…ALAEVASASK (75 aa)) form the Carrier 1 domain. Residue S1446 is modified to O-(pantetheine 4'-phosphoryl)serine. A compositionally biased stretch (acidic residues) spans 1995-2029 (ADEDDEEDDELDEEFDAEVDEEDEDEEEEEDDDGE). The tract at residues 1995-2030 (ADEDDEEDDELDEEFDAEVDEEDEDEEEEEDDDGEN) is disordered. Residues 2989 to 3064 (APRTATEETL…VLARVIDEAL (76 aa)) form the Carrier 2 domain. S3024 is modified (O-(pantetheine 4'-phosphoryl)serine).

Belongs to the ATP-dependent AMP-binding enzyme family. Requires pantetheine 4'-phosphate as cofactor.

Its function is as follows. Involved in the synthesis of chondramides. Activates R-beta-tyrosine and probably phenylalanine. The protein is Chondramide synthase cmdD of Chondromyces crocatus.